We begin with the raw amino-acid sequence, 72 residues long: U1-sicaritoxin-Sdo1a (72 aa).

The N-terminal stretch at 1–24 is a signal peptide; sequence MMKKFTCFLLCATILCAIFCVSVA. The propeptide occupies 25 to 41; it reads EKFHKMKSDIERDETPM. 3 disulfide bridges follow: cysteine 43–cysteine 61, cysteine 50–cysteine 64, and cysteine 60–cysteine 69.

Expressed by the venom gland.

It localises to the secreted. The sequence is that of U1-sicaritoxin-Sdo1a from Hexophthalma dolichocephala (Afrotropical spider).